A 147-amino-acid polypeptide reads, in one-letter code: Ribonuclease H (147 aa).

Mg(2+)-binding residues include Asp-8, Glu-46, Asp-68, and Asp-132.

The protein belongs to the RNase H family. As to quaternary structure, monomer. Requires Mg(2+) as cofactor.

The protein resides in the cytoplasm. It carries out the reaction Endonucleolytic cleavage to 5'-phosphomonoester.. Its function is as follows. Endonuclease that specifically degrades the RNA of RNA-DNA hybrids. This Geotalea uraniireducens (strain Rf4) (Geobacter uraniireducens) protein is Ribonuclease H.